A 75-amino-acid polypeptide reads, in one-letter code: DNA-directed RNA polymerase subunit omega (75 aa).

This sequence belongs to the RNA polymerase subunit omega family. In terms of assembly, in cyanobacteria the RNAP catalytic core is composed of 2 alpha, 1 beta, 1 beta', 1 gamma and 1 omega subunit. When a sigma factor is associated with the core the holoenzyme is formed, which can initiate transcription.

It carries out the reaction RNA(n) + a ribonucleoside 5'-triphosphate = RNA(n+1) + diphosphate. Functionally, promotes RNA polymerase assembly. Latches the N- and C-terminal regions of the beta' subunit thereby facilitating its interaction with the beta and alpha subunits. The sequence is that of DNA-directed RNA polymerase subunit omega from Prochlorococcus marinus (strain MIT 9313).